Consider the following 341-residue polypeptide: MAHARISMYMPPDIDPTKAAIAYGCRALSKLNEELQSRDLLTRQKALVALCDLMHDPEYVYEAINIGCLESLKTLLQDDDNLVRIKTTEVLYIMATHYVGRVGFLKHDIIQALSLLLSDHQTLCRENLHQAYKHLAQLPKGAQGIVQSGLIPSLVRKLQKEEDHIQEIILDTLALCLQEDATEALESQAVPCLKEKLLSQNSEIRSKAARALIAISIPLDGKNQVWKNKVIPILVTLLSDTDEEVKANAAGALMHATVTTEGKYAALDANAIEPLLELLSTNPKTKLCLNATKALTMLAEAPEGRKLLLSHVPIFRYLLAHKNEAIQRAAEVAIKVIEWKP.

ARM repeat units follow at residues 16–55 (PTKA…DLMH), 57–96 (PEYV…IMAT), 99–138 (VGRV…LAQL), 139–178 (PKGA…LCLQ), 180–217 (DATE…AISI), 219–258 (LDGK…HATV), 260–300 (TEGK…MLAE), and 302–339 (PEGR…VIEW).

It belongs to the flagellar radial spoke RSP14 family. As to quaternary structure, component of the axonemal radial spoke complex 1 (RS1), at least composed of spoke head proteins RSPH1, RSPH3, RSPH9 and the cilia-specific component RSPH4A or sperm-specific component RSPH6A, spoke stalk proteins RSPH14, DNAJB13, DYDC1, ROPN1L and NME5, and the anchor protein IQUB.

Its subcellular location is the cytoplasm. It is found in the cytoskeleton. It localises to the flagellum axoneme. Its function is as follows. Functions as part of axonemal radial spoke complexes that play an important part in the motility of sperm and cilia. The sequence is that of Radial spoke head 14 homolog from Mus musculus (Mouse).